We begin with the raw amino-acid sequence, 198 residues long: Recombination protein RecR (198 aa).

The C4-type zinc-finger motif lies at 57-72; it reads CSVCGHITDRDPCYIC. Residues 80 to 175 enclose the Toprim domain; sequence SVVCVVQEPK…KVTRIAHGLP (96 aa).

This sequence belongs to the RecR family.

May play a role in DNA repair. It seems to be involved in an RecBC-independent recombinational process of DNA repair. It may act with RecF and RecO. In Bacillus anthracis (strain A0248), this protein is Recombination protein RecR.